The following is a 671-amino-acid chain: Putative glycoside hydrolase BT_3595 (671 aa).

Positions 1-24 are cleaved as a signal peptide; sequence MITGIISILCYLQCFGTLSASVTA.

The protein belongs to the glycoside hydrolase-like 3 (GHL3) family.

The polypeptide is Putative glycoside hydrolase BT_3595 (Bacteroides thetaiotaomicron (strain ATCC 29148 / DSM 2079 / JCM 5827 / CCUG 10774 / NCTC 10582 / VPI-5482 / E50)).